The chain runs to 319 residues: MSVGFIGAGQLAFALAKGFTAAGVLAAHKIMASSPDMDLATVSALRKMGVKLTPHNKETVQHSDVLFLAVKPHIIPFILDEIGADIEDRHIVVSCAAGVTISSIEKKLSAFRPAPRVIRCMTNTPVVVREGATVYATGTHAQVEDGRLMEQLLSSVGFCTEVEEDLIDAVTGLSGSGPAYAFTALDALADGGVKMGLPRRLAVRLGAQALLGAAKMLLHSEQHPGQLKDNVSSPGGATIHALHVLESGGFRSLLINAVEASCIRTRELQSMADQEQVSPAAIKKTILDKVKLDSPAGTALSPSGHTKLLPRSLAPAGKD.

Ser-2 carries the N-acetylserine modification. NADP(+) is bound by residues Ile-6 to Leu-11 and Ser-34. NADPH-binding residues include Ala-8, Gln-10, Leu-11, Ser-34, Asp-36, Asn-56, Val-70, Lys-71, and Ala-97. NADP(+) is bound by residues Asn-56, Ala-69–Pro-72, and Cys-95–Ala-97. Glu-164 lines the L-proline pocket. Asn-230 is an NADPH binding site. Positions 237 and 238 each coordinate L-proline. Ser-278 and Ser-301 each carry phosphoserine. Positions Ser-294–Asp-319 are disordered.

It belongs to the pyrroline-5-carboxylate reductase family. In terms of assembly, homodecamer; composed of 5 homodimers. Interacts with LTO1.

It is found in the mitochondrion. It carries out the reaction L-proline + NADP(+) = (S)-1-pyrroline-5-carboxylate + NADPH + 2 H(+). It catalyses the reaction L-proline + NAD(+) = (S)-1-pyrroline-5-carboxylate + NADH + 2 H(+). The protein operates within amino-acid biosynthesis; L-proline biosynthesis; L-proline from L-glutamate 5-semialdehyde: step 1/1. With respect to regulation, subject to competitive inhibition by the reaction product proline. Subject to competitive inhibition by stearoyl coenzyme A. Oxidoreductase that catalyzes the last step in proline biosynthesis, which corresponds to the reduction of pyrroline-5-carboxylate to L-proline using NAD(P)H. At physiologic concentrations, has higher specific activity in the presence of NADH. Involved in the cellular response to oxidative stress. The protein is Pyrroline-5-carboxylate reductase 1, mitochondrial of Homo sapiens (Human).